Here is a 208-residue protein sequence, read N- to C-terminus: Large ribosomal subunit protein uL4 (208 aa).

Residues 50 to 83 (VKTRAEVSGGGRKPWKQKGTGRARQGSIRAPQWK) form a disordered region.

This sequence belongs to the universal ribosomal protein uL4 family. Part of the 50S ribosomal subunit.

Its function is as follows. One of the primary rRNA binding proteins, this protein initially binds near the 5'-end of the 23S rRNA. It is important during the early stages of 50S assembly. It makes multiple contacts with different domains of the 23S rRNA in the assembled 50S subunit and ribosome. In terms of biological role, forms part of the polypeptide exit tunnel. The chain is Large ribosomal subunit protein uL4 from Mycoplasma capricolum subsp. capricolum (strain California kid / ATCC 27343 / NCTC 10154).